Reading from the N-terminus, the 212-residue chain is Photosynthetic NDH subunit of subcomplex B 5, chloroplastic (212 aa).

Residues 1–48 (MATVTILSPKSIPKVTDSKFGARVSDQIVNVVKCGKSGRRLKLAKLVS) constitute a chloroplast transit peptide. Transmembrane regions (helical) follow at residues 115–135 (FQGL…YFDA) and 136–156 (PGEY…IIEM).

Part of the chloroplast NDH complex, composed of a mixture of chloroplast and nucleus encoded subunits. Component of the NDH subcomplex B, at least composed of PnsB1, PnsB2, PnsB3, PnsB4 and PnsB5.

The protein localises to the plastid. Its subcellular location is the chloroplast membrane. In terms of biological role, NDH shuttles electrons from NAD(P)H:plastoquinone, via FMN and iron-sulfur (Fe-S) centers, to quinones in the photosynthetic chain and possibly in a chloroplast respiratory chain. The immediate electron acceptor for the enzyme in this species is believed to be plastoquinone. Couples the redox reaction to proton translocation, and thus conserves the redox energy in a proton gradient. The polypeptide is Photosynthetic NDH subunit of subcomplex B 5, chloroplastic (Arabidopsis thaliana (Mouse-ear cress)).